Consider the following 466-residue polypeptide: Histidine--tRNA ligase (466 aa).

This sequence belongs to the class-II aminoacyl-tRNA synthetase family. Homodimer.

Its subcellular location is the cytoplasm. The enzyme catalyses tRNA(His) + L-histidine + ATP = L-histidyl-tRNA(His) + AMP + diphosphate + H(+). In Bifidobacterium animalis subsp. lactis (strain AD011), this protein is Histidine--tRNA ligase.